A 348-amino-acid polypeptide reads, in one-letter code: Enkurin domain-containing protein 1 (348 aa).

Disordered regions lie at residues 1–65 (MCEG…RPGG), 84–195 (GGIS…PSAK), and 262–282 (AEAR…TRMP). Residue S93 is modified to Phosphoserine. Residues 95–127 (KRKDPKDHEKENMRRIREIQRRFREQEHSREQG) are compositionally biased toward basic and acidic residues. The residue at position 138 (S138) is a Phosphoserine. The span at 139-148 (PKYDKVESRV) shows a compositional bias: basic and acidic residues. Residues 253–345 (ERRDLWRREA…IFSRPKVFVK (93 aa)) form the Enkurin domain.

Interacts with alpha-tubulin. Interacts (via central region) with CCP110 (via N-terminal region); competes with CEP97 for binding to CCP110.

The protein resides in the cytoplasm. It localises to the cytoskeleton. The protein localises to the microtubule organizing center. Its subcellular location is the centrosome. It is found in the centriole. The protein resides in the cilium basal body. It localises to the cell projection. The protein localises to the cilium. Its subcellular location is the spindle. It is found in the spindle pole. The protein resides in the cilium axoneme. Its function is as follows. Microtubule-binding protein which regulates microtubule organization and stability. Promotes the stability of astral microtubules and facilitates the proper orientation of the mitotic spindle. This allows the oriented division of basal keratinocytes and contributes to epidermal stratification. Required for the assembly of both primary and motile cilia. Destabilizes the interaction between CCP110 and CEP97 by competing with CEP97 for binding to CCP110 which promotes the removal of CCP110 and CEP97 from the mother centriole and allows the initiation of ciliogenesis. The chain is Enkurin domain-containing protein 1 (ENKD1) from Bos taurus (Bovine).